The primary structure comprises 215 residues: HTH-type transcriptional regulator AcrR (215 aa).

In terms of domain architecture, HTH tetR-type spans 10–70; that stretch reads QETRQHILDV…EIWELSESNI (61 aa). A DNA-binding region (H-T-H motif) is located at residues 33-52; sequence SLGEIAKAAGVTRGAIYWHF.

Functionally, potential regulator protein for the acrAB genes. The sequence is that of HTH-type transcriptional regulator AcrR (acrR) from Shigella flexneri.